Consider the following 248-residue polypeptide: Ribosomal RNA small subunit methyltransferase J (248 aa).

Residues 98–99, 114–115, 150–151, and D168 each bind S-adenosyl-L-methionine; these read RD, ER, and SS.

Belongs to the methyltransferase superfamily. RsmJ family.

The protein localises to the cytoplasm. It catalyses the reaction guanosine(1516) in 16S rRNA + S-adenosyl-L-methionine = N(2)-methylguanosine(1516) in 16S rRNA + S-adenosyl-L-homocysteine + H(+). Specifically methylates the guanosine in position 1516 of 16S rRNA. In Shewanella denitrificans (strain OS217 / ATCC BAA-1090 / DSM 15013), this protein is Ribosomal RNA small subunit methyltransferase J.